The following is a 115-amino-acid chain: Chondroitin proteoglycan 8 (115 aa).

The first 16 residues, 1–16 (MRPFILLALLVSVTVA), serve as a signal peptide directing secretion. Residues 33 to 96 (VRRTTRDASD…GSGAAEVTSV (64 aa)) form a disordered region. Ser61, Ser63, Ser84, Ser88, and Ser109 each carry an O-linked (Xyl...) (chondroitin sulfate) serine glycan.

The chain is Chondroitin proteoglycan 8 from Caenorhabditis elegans.